Consider the following 126-residue polypeptide: Small ribosomal subunit protein bS6 (126 aa).

This sequence belongs to the bacterial ribosomal protein bS6 family.

In terms of biological role, binds together with bS18 to 16S ribosomal RNA. The chain is Small ribosomal subunit protein bS6 from Actinobacillus succinogenes (strain ATCC 55618 / DSM 22257 / CCUG 43843 / 130Z).